We begin with the raw amino-acid sequence, 292 residues long: 4-hydroxy-tetrahydrodipicolinate synthase (292 aa).

T45 contacts pyruvate. The Proton donor/acceptor role is filled by Y133. K161 acts as the Schiff-base intermediate with substrate in catalysis. Pyruvate is bound at residue I203.

The protein belongs to the DapA family. In terms of assembly, homodimer.

Its subcellular location is the cytoplasm. The enzyme catalyses L-aspartate 4-semialdehyde + pyruvate = (2S,4S)-4-hydroxy-2,3,4,5-tetrahydrodipicolinate + H2O + H(+). It participates in amino-acid biosynthesis; L-lysine biosynthesis via DAP pathway; (S)-tetrahydrodipicolinate from L-aspartate: step 3/4. Catalyzes the condensation of (S)-aspartate-beta-semialdehyde [(S)-ASA] and pyruvate to 4-hydroxy-tetrahydrodipicolinate (HTPA). The chain is 4-hydroxy-tetrahydrodipicolinate synthase from Pseudomonas syringae pv. syringae (strain B728a).